The following is a 323-amino-acid chain: tRNA U34 carboxymethyltransferase (323 aa).

Carboxy-S-adenosyl-L-methionine contacts are provided by residues lysine 91, tryptophan 105, lysine 110, glycine 130, 181-182 (IE), methionine 196, tyrosine 200, and arginine 315.

This sequence belongs to the class I-like SAM-binding methyltransferase superfamily. CmoB family. As to quaternary structure, homotetramer.

It catalyses the reaction carboxy-S-adenosyl-L-methionine + 5-hydroxyuridine(34) in tRNA = 5-carboxymethoxyuridine(34) in tRNA + S-adenosyl-L-homocysteine + H(+). Catalyzes carboxymethyl transfer from carboxy-S-adenosyl-L-methionine (Cx-SAM) to 5-hydroxyuridine (ho5U) to form 5-carboxymethoxyuridine (cmo5U) at position 34 in tRNAs. In Serratia proteamaculans (strain 568), this protein is tRNA U34 carboxymethyltransferase.